A 225-amino-acid polypeptide reads, in one-letter code: DNA-binding response regulator MtrA (225 aa).

In terms of domain architecture, Response regulatory spans 4 to 117 (RILVVDDDAS…ELVARVRARL (114 aa)). A 4-aspartylphosphate modification is found at Asp53. Residues 125–224 (AEMLSIADVD…VRGVGYKAGP (100 aa)) constitute a DNA-binding region (ompR/PhoB-type).

Phosphorylated by MtrB.

Its function is as follows. Member of the two-component regulatory system MtrA/MtrB. The sequence is that of DNA-binding response regulator MtrA (mtrA) from Mycobacterium leprae (strain TN).